A 237-amino-acid chain; its full sequence is Ribosomal RNA small subunit methyltransferase G (237 aa).

Residues glycine 78, phenylalanine 83, 129–130, and arginine 148 contribute to the S-adenosyl-L-methionine site; that span reads AE. The interval 218-237 is disordered; it reads KKETPNKYPRKAGMPNKRPL.

Belongs to the methyltransferase superfamily. RNA methyltransferase RsmG family.

It is found in the cytoplasm. In terms of biological role, specifically methylates the N7 position of a guanine in 16S rRNA. The polypeptide is Ribosomal RNA small subunit methyltransferase G (Streptococcus pneumoniae (strain ATCC BAA-255 / R6)).